Reading from the N-terminus, the 603-residue chain is MATIEEIAHQIIEQQMGEIVTEQQTGQKIQIVTALDHNTQGKQFILTNHDGSTPSKVILARQDSTPGKVFLTPDAAGVNQLFFTTPDLSAQHLQLLTDNSSPDQGPNKVFDLCVVCGDKASGRHYGAVTCEGCKGFFKRSIRKNLVYSCRGSKDCIINKHHRNRCQYCRLQRCIAFGMKQDSVQCERKPIEVSREKSSNCAASTEKIYIRKDLRSPLTATPTFVTDSETTRSTGLLDSGMFVNIHPSGVKTESTVLMTSDKAESCQGDLSTLASVVTSLANLGKTKDLSQNSNEMSMIESLSNDDTSLCEFQEMQTNGDVSRAFDTLAKALNPGESTACQSSVAGMEGSVHLITGDSSINYTEKEGPLLSDSHVAFRLTMPSPMPEYLNVHYIGESASRLLFLSMHWALSIPSFQALGQENSISLVKAYWNELFTLGLAQCWQVMNVATILATFVNCLHNSLQQDKMSTERRKLLMEHIFKLQEFCNSMVKLCIDGYEYAYLKAIVLFSPDHPGLENMEQIEKFQEKAYVEFQDYITKTYPDDTYRLSRLLLRLPALRLMNATITEELFFKGLIGNIRIDSVIPHILKMEPADYNSQIIGHSI.

Residues M1–M178 form a required for interaction with KAT2B region. The nuclear receptor DNA-binding region spans F110 to C185. 2 NR C4-type zinc fingers span residues C113–C133 and C149–C168. Phosphoserine is present on residues S197 and S215. T220 carries the phosphothreonine modification. The residue at position 222 (T222) is a Phosphothreonine; by MAPK1. K250 participates in a covalent cross-link: Glycyl lysine isopeptide (Lys-Gly) (interchain with G-Cter in SUMO); alternate. K250 is covalently cross-linked (Glycyl lysine isopeptide (Lys-Gly) (interchain with G-Cter in SUMO2); alternate). An NR LBD domain is found at G348–E590. S581 is subject to Phosphoserine; by PKC. The segment at P584–I603 is required for interaction with NRIP1. A Glycyl lysine isopeptide (Lys-Gly) (interchain with G-Cter in SUMO2) cross-link involves residue K588.

This sequence belongs to the nuclear hormone receptor family. NR2 subfamily. In terms of assembly, homodimer. Heterodimer; binds DNA as a heterodimer with NR2C2 required for chromatin remodeling and for binding to promoter regions such as globin DR1 repeats. Interacts with ESR1; the interaction prevents homodimerization of ESR1 and suppresses its transcriptional activity and cell growth. Interacts with NRIP1 (via its LXXLL motifs); the interaction provides corepressor activity. Interacts with HDAC3 (via the DNA-binding domain). Interacts with HDAC4 (via the DNA-binding domain). Interacts with PIAS1; the interaction is required for sumoylation of NR2C1. Interacts with UBE2I; the interaction is required for sumoylation of NR2C1. Interacts with KAT2B; the interaction acts as a corepressor of gene expression. Post-translationally, sumoylation requires both PIAS1 and UBE2I. Sumoylation appears to dissociate NR2C1 from the PML nuclear bodies. Enhances the interaction with NRIP1 but inhibits interaction with KAT2B. In proliferating cells, stimulation by all-trans retinoic acid, activation of MAPK1-mediated phosphorylation and recruitment to PML bodies with subsequent sumoylation, suppresses OCT4 expression. Phosphorylated on several serine and threonine residues. Phosphorylation on Thr-220, stimulated by all-trans retinoic acid (atRA) mediates PML location and sumoylation in proliferating cells which then modulates its association with effector molecules, KAT2B and NRIP1. Phosphorylation on Ser-581 by PKC is important for protein stability and function as activator of RARB.

The protein localises to the nucleus. It is found in the PML body. Functionally, orphan nuclear receptor. Binds the IR7 element in the promoter of its own gene in an autoregulatory negative feedback mechanism. Primarily repressor of a broad range of genes. Binds to hormone response elements (HREs) consisting of two 5'-AGGTCA-3' half site direct repeat consensus sequences. Together with NR2C2, forms the core of the DRED (direct repeat erythroid-definitive) complex that represses embryonic and fetal globin transcription. Also activator of OCT4 gene expression. May be involved in stem cell proliferation and differentiation. Mediator of retinoic acid-regulated preadipocyte proliferation. This is Nuclear receptor subfamily 2 group C member 1 (NR2C1) from Macaca fascicularis (Crab-eating macaque).